We begin with the raw amino-acid sequence, 119 residues long: MVKLAFPRELRLLTPSQFTFVFQQPQRAGTPQITILGRLNSLGHPRIGLTVAKKNVRRAHERNRIKRLTRESFRLRQHELPAMDFVVVAKKGVADLDNRALSEALEKLWRRHCRLARGP.

It belongs to the RnpA family. In terms of assembly, consists of a catalytic RNA component (M1 or rnpB) and a protein subunit.

It catalyses the reaction Endonucleolytic cleavage of RNA, removing 5'-extranucleotides from tRNA precursor.. RNaseP catalyzes the removal of the 5'-leader sequence from pre-tRNA to produce the mature 5'-terminus. It can also cleave other RNA substrates such as 4.5S RNA. The protein component plays an auxiliary but essential role in vivo by binding to the 5'-leader sequence and broadening the substrate specificity of the ribozyme. The sequence is that of Ribonuclease P protein component from Escherichia coli O6:H1 (strain CFT073 / ATCC 700928 / UPEC).